The chain runs to 198 residues: Large ribosomal subunit protein bL25 (198 aa).

Belongs to the bacterial ribosomal protein bL25 family. CTC subfamily. In terms of assembly, part of the 50S ribosomal subunit; part of the 5S rRNA/L5/L18/L25 subcomplex. Contacts the 5S rRNA. Binds to the 5S rRNA independently of L5 and L18.

This is one of the proteins that binds to the 5S RNA in the ribosome where it forms part of the central protuberance. This chain is Large ribosomal subunit protein bL25, found in Lysinibacillus sphaericus (strain C3-41).